The following is a 251-amino-acid chain: Ribosomal RNA small subunit methyltransferase J (251 aa).

Residues 100–101, 116–117, and D170 contribute to the S-adenosyl-L-methionine site; these read RD and ER.

Belongs to the methyltransferase superfamily. RsmJ family.

The protein resides in the cytoplasm. It carries out the reaction guanosine(1516) in 16S rRNA + S-adenosyl-L-methionine = N(2)-methylguanosine(1516) in 16S rRNA + S-adenosyl-L-homocysteine + H(+). Its function is as follows. Specifically methylates the guanosine in position 1516 of 16S rRNA. This chain is Ribosomal RNA small subunit methyltransferase J, found in Actinobacillus pleuropneumoniae serotype 5b (strain L20).